The sequence spans 72 residues: MSLGVLAAAIAVGLGALGAGIGNGLIVSRTIEGIARQPELRPVLQTTMFIGVALVEALPIIGVVFSFIYLGR.

A run of 2 helical transmembrane segments spans residues 1–21 (MSLG…GAGI) and 48–68 (MFIG…FSFI).

This sequence belongs to the ATPase C chain family. As to quaternary structure, F-type ATPases have 2 components, F(1) - the catalytic core - and F(0) - the membrane proton channel. F(1) has five subunits: alpha(3), beta(3), gamma(1), delta(1), epsilon(1). F(0) has three main subunits: a(1), b(2) and c(10-14). The alpha and beta chains form an alternating ring which encloses part of the gamma chain. F(1) is attached to F(0) by a central stalk formed by the gamma and epsilon chains, while a peripheral stalk is formed by the delta and b chains.

The protein resides in the cell membrane. In terms of biological role, f(1)F(0) ATP synthase produces ATP from ADP in the presence of a proton or sodium gradient. F-type ATPases consist of two structural domains, F(1) containing the extramembraneous catalytic core and F(0) containing the membrane proton channel, linked together by a central stalk and a peripheral stalk. During catalysis, ATP synthesis in the catalytic domain of F(1) is coupled via a rotary mechanism of the central stalk subunits to proton translocation. Functionally, key component of the F(0) channel; it plays a direct role in translocation across the membrane. A homomeric c-ring of between 10-14 subunits forms the central stalk rotor element with the F(1) delta and epsilon subunits. This chain is ATP synthase subunit c, found in Geobacillus kaustophilus (strain HTA426).